The primary structure comprises 626 residues: MESARLVGDYALGPRIGSGSFAVVWLAKHRSSGLEVAVKEIDKKLLSPKVRDNLLKEISILSTIDHPNIIRFYEAIETGDRIFLVLEYCSGGDLAGYINRHGKVPEAVAKHFMRQLALGLQVLQEKHFIHRDLKPQNLLLSSKEVTPLLKIGDFGFARSLTPESMAETFCGSPLYMAPEIIRNQKYDAKADLWSAGAILFQLVTGKPPFDGNNHIQLFHNIVRDTELKFPEDTRNEIHPDCVDLCRSLLRRNPIERLTFREFFNHMFLREPRQIPDVEHSGFSTCTGKSLLPSAQPSTSTNRFKSSAENVHKHGSSSSASNSQISMPHTSFEKTRKDTEGQCSSNQSGVVDSLELIEREYVLVNRPSASLEGSSDCFDTSLQDSGFPNILPRNEKVSSSSLEAQKPLSDVSGPRPASVSYLLTEVQRLTIVHPPTKLQLLHQYAQALTELASEMGNTGQVKESFAVTLVVLAVWRKALEICDSWMMSVGENEVNPDPTTAPETSIPDLNSPAPAKTWVTQEFVTALNQAENLSTQLNETSAATHMPDAMETIYERALAYGKSGGAEEYLSNKESAATLYKKAILLLSFIIEEAVTLSLNPSFSLTPDDKKRILYYISNLQHRRSHL.

The Protein kinase domain maps to tyrosine 10–leucine 268. ATP contacts are provided by residues isoleucine 16–valine 24 and lysine 39. Catalysis depends on aspartate 132, which acts as the Proton acceptor. Polar residues predominate over residues lysine 288–glutamate 308. The interval lysine 288–serine 347 is disordered. Over residues serine 315–serine 325 the composition is skewed to low complexity. A compositionally biased stretch (basic and acidic residues) spans serine 330 to glutamate 339. An AIM (Atg8-family-interacting motif) motif is present at residues tyrosine 360–valine 363.

It belongs to the protein kinase superfamily. Ser/Thr protein kinase family. As to quaternary structure, interacts with ATG13A. Interacts with ATG8E. Binds to ATG8E on autophagic vesicles. In terms of processing, phosphorylated during nutrient starvation. Dephosphorylated in nutrient-rich conditions.

The protein localises to the cytoplasmic vesicle. The protein resides in the autophagosome. Its function is as follows. Serine/threonine protein kinase involved in autophagy in a nutritional condition-dependent manner. The ATG1-ATG13 protein kinase complex regulates downstream events required for autophagosome enclosure and/or vacuolar delivery. Becomes a target of autophagy under nutrient starvation. Connects autophagy to plant nutritional status. The protein is Serine/threonine-protein kinase ATG1a of Arabidopsis thaliana (Mouse-ear cress).